Reading from the N-terminus, the 226-residue chain is 2-C-methyl-D-erythritol 4-phosphate cytidylyltransferase (226 aa).

Belongs to the IspD/TarI cytidylyltransferase family. IspD subfamily.

The catalysed reaction is 2-C-methyl-D-erythritol 4-phosphate + CTP + H(+) = 4-CDP-2-C-methyl-D-erythritol + diphosphate. Its pathway is isoprenoid biosynthesis; isopentenyl diphosphate biosynthesis via DXP pathway; isopentenyl diphosphate from 1-deoxy-D-xylulose 5-phosphate: step 2/6. In terms of biological role, catalyzes the formation of 4-diphosphocytidyl-2-C-methyl-D-erythritol from CTP and 2-C-methyl-D-erythritol 4-phosphate (MEP). The protein is 2-C-methyl-D-erythritol 4-phosphate cytidylyltransferase of Bacillus cereus (strain ATCC 10987 / NRS 248).